The chain runs to 482 residues: Matrix metalloproteinase-20 (482 aa).

Residues 1–21 (MKVLPASGLAVLVTALKFATA) form the signal peptide. A propeptide spanning residues 22–106 (DPNLLAATPR…PRCGVPDVAN (85 aa)) is cleaved from the precursor. Positions 97 to 104 (PRCGVPDV) match the Cysteine switch motif. Position 99 (C99) interacts with Zn(2+). The Ca(2+) site is built by E163, A164, and D165. Residues H175 and D177 each contribute to the Zn(2+) site. Positions 182, 183, 185, and 187 each coordinate Ca(2+). A Zn(2+)-binding site is contributed by H190. 4 residues coordinate Ca(2+): E196, G197, G199, and D201. H203 contributes to the Zn(2+) binding site. Ca(2+)-binding residues include D205 and E208. H225 lines the Zn(2+) pocket. E226 is an active-site residue. Zn(2+) is bound by residues H229 and H235. Hemopexin repeat units follow at residues 292-342 (PDLC…FPQL), 343-388 (MSNV…GFPR), 390-438 (VQRI…FSGV), and 439-482 (SGHI…WIGC). A disulfide bond links C295 and C482.

This sequence belongs to the peptidase M10A family. It depends on Zn(2+) as a cofactor. Ca(2+) serves as cofactor. Autoactivates at least at the 106-Asn-|-Tyr-107 site. In terms of tissue distribution, expressed in the enamel organ.

The protein resides in the secreted. The protein localises to the extracellular space. It localises to the extracellular matrix. Degrades amelogenin, the major protein component of the enamel matrix and two of the macromolecules characterizing the cartilage extracellular matrix: aggrecan and the cartilage oligomeric matrix protein (COMP). May play a central role in tooth enamel formation. Cleaves aggrecan at the '360-Asn-|-Phe-361' site. This is Matrix metalloproteinase-20 (Mmp20) from Mus musculus (Mouse).